We begin with the raw amino-acid sequence, 147 residues long: Hemoglobin subunit beta-M (147 aa).

Val2 is subject to N-acetylvaline. Positions 3–147 (HLTSEEKNCI…VAHALAHKYH (145 aa)) constitute a Globin domain. Thr13 carries the phosphothreonine modification. Residue Ser45 is modified to Phosphoserine. Lys60 bears the N6-acetyllysine mark. Position 64 (His64) interacts with heme b. Lys83 carries the post-translational modification N6-acetyllysine. His93 lines the heme b pocket. An S-nitrosocysteine modification is found at Cys94. At Lys145 the chain carries N6-acetyllysine.

Belongs to the globin family. Heterotetramer of two alpha chains and two beta chains. In terms of tissue distribution, red blood cells.

Involved in oxygen transport from the lung to the various peripheral tissues. This chain is Hemoglobin subunit beta-M (HBB), found in Didelphis virginiana (North American opossum).